Consider the following 289-residue polypeptide: Nodulation protein NolT (289 aa).

The first 33 residues, 1-33 (MFGSAHGDTTSSDTSGRRPLRLVVLPLLLALSS), serve as a signal peptide directing secretion. Residue Cys-34 is the site of N-palmitoyl cysteine attachment. Cys-34 carries the S-diacylglycerol cysteine lipid modification. A helical transmembrane segment spans residues 233 to 253 (VAVGVSAAVFAVTCYLLFIVL).

Belongs to the YscJ lipoprotein family.

The protein resides in the cell outer membrane. In Sinorhizobium fredii (strain NBRC 101917 / NGR234), this protein is Nodulation protein NolT (nolT).